A 916-amino-acid polypeptide reads, in one-letter code: Internalin J (916 aa).

The N-terminal stretch at 1–25 (MKTSKIIIASLVSLTLVSNPILTFA) is a signal peptide. LRR repeat units lie at residues 94-115 (TLTSLDCHNSSIADMTGIEKLT), 116-136 (GLTKLICTYNNITTLDLSQNT), 137-157 (NLTYLACDSNKLTNLDVTPLT), 158-179 (KLTYLNCDTNKLTKIDVSQNPL), 180-200 (LTYLNCARNTLTEIDVSHNTQ), 201-221 (LTELDCHLNKKITKLDVTPQT), 222-243 (QLTTLDCSFNKITALDVSQNKL), 244-263 (LNRLNCDTNNITKLDLNQNI), 264-284 (QLTFLNCSSNKLTEIDVTPLT), 285-306 (QLTYFDCSVNPLTELDVSTLSK), 316-325 (DLLEIDLTHN), 338-357 (KIKELDVTHNTQLYLLDCQA), 359-368 (GITELDLSQN), and 380-402 (ELTKLDVSHNTKLKSLSCVNAHI). MucBP domains follow at residues 506–568 (PIKG…SQSV), 576–638 (IVAA…SQTV), 646–708 (IVAA…AQTV), 717–779 (APEK…SQTV), and 787–849 (IVAA…AQTV). The tract at residues 862–888 (PLPDKKTTKPSNLKTTEVKKASDTLPK) is disordered. Positions 886 to 890 (LPKTG) match the LPXTG sorting signal motif. At Thr889 the chain carries Pentaglycyl murein peptidoglycan amidated threonine. Residues 890 to 916 (GDSTPWKSALLGVFLSSTALVIWKKKK) constitute a propeptide, removed by sortase.

The protein belongs to the internalin family.

It is found in the secreted. Its subcellular location is the cell wall. Functionally, involved in several steps of L.monocytogenes infection, probably improves adhesin to host cells. The sequence is that of Internalin J (inlJ) from Listeria monocytogenes serotype 4b (strain F2365).